An 83-amino-acid polypeptide reads, in one-letter code: Cytochrome b559 subunit alpha (83 aa).

Residues 21 to 35 (VIHSITIPSLFIAGW) traverse the membrane as a helical segment. His-23 provides a ligand contact to heme.

This sequence belongs to the PsbE/PsbF family. As to quaternary structure, heterodimer of an alpha subunit and a beta subunit. PSII is composed of 1 copy each of membrane proteins PsbA, PsbB, PsbC, PsbD, PsbE, PsbF, PsbH, PsbI, PsbJ, PsbK, PsbL, PsbM, PsbT, PsbX, PsbY, PsbZ, Psb30/Ycf12, at least 3 peripheral proteins of the oxygen-evolving complex and a large number of cofactors. It forms dimeric complexes. Heme b serves as cofactor.

The protein resides in the plastid. The protein localises to the chloroplast thylakoid membrane. This b-type cytochrome is tightly associated with the reaction center of photosystem II (PSII). PSII is a light-driven water:plastoquinone oxidoreductase that uses light energy to abstract electrons from H(2)O, generating O(2) and a proton gradient subsequently used for ATP formation. It consists of a core antenna complex that captures photons, and an electron transfer chain that converts photonic excitation into a charge separation. This is Cytochrome b559 subunit alpha from Ginkgo biloba (Ginkgo).